Consider the following 280-residue polypeptide: 4-diphosphocytidyl-2-C-methyl-D-erythritol kinase (280 aa).

Lys-9 is a catalytic residue. 92–102 (PMGGGLGGGSS) is a binding site for ATP. Asp-134 is an active-site residue.

It belongs to the GHMP kinase family. IspE subfamily.

It catalyses the reaction 4-CDP-2-C-methyl-D-erythritol + ATP = 4-CDP-2-C-methyl-D-erythritol 2-phosphate + ADP + H(+). It functions in the pathway isoprenoid biosynthesis; isopentenyl diphosphate biosynthesis via DXP pathway; isopentenyl diphosphate from 1-deoxy-D-xylulose 5-phosphate: step 3/6. Catalyzes the phosphorylation of the position 2 hydroxy group of 4-diphosphocytidyl-2C-methyl-D-erythritol. This is 4-diphosphocytidyl-2-C-methyl-D-erythritol kinase from Nitrosococcus oceani (strain ATCC 19707 / BCRC 17464 / JCM 30415 / NCIMB 11848 / C-107).